The following is a 191-amino-acid chain: Dephospho-CoA kinase (191 aa).

The region spanning A3–V191 is the DPCK domain. A11–F16 lines the ATP pocket.

This sequence belongs to the CoaE family.

It is found in the cytoplasm. It carries out the reaction 3'-dephospho-CoA + ATP = ADP + CoA + H(+). The protein operates within cofactor biosynthesis; coenzyme A biosynthesis; CoA from (R)-pantothenate: step 5/5. Its function is as follows. Catalyzes the phosphorylation of the 3'-hydroxyl group of dephosphocoenzyme A to form coenzyme A. This is Dephospho-CoA kinase from Rickettsia prowazekii (strain Madrid E).